Reading from the N-terminus, the 937-residue chain is Protein Niban 1 (937 aa).

Residue glycine 2 is the site of N-myristoyl glycine attachment. 5 positions are modified to phosphoserine: serine 578, serine 581, serine 595, serine 601, and serine 646. The span at 584-595 (DLKTSMGSNQAS) shows a compositional bias: polar residues. Disordered regions lie at residues 584-710 (DLKT…GSLR) and 724-891 (SAPE…LGGN). The span at 640–651 (ASISGSSPPSGE) shows a compositional bias: low complexity. Residues 655 to 681 (VSVSGVDNSAGNPLSADNSAGPLSSHL) show a composition bias toward polar residues. Over residues 688–701 (EPPKDEETAHKRPE) the composition is skewed to basic and acidic residues. Phosphoserine is present on residues serine 708 and serine 768. Composition is skewed to polar residues over residues 802–817 (PTSQ…NTSC) and 855–869 (VTVT…SSNP).

The protein belongs to the Niban family. Detected in brain, lung, spleen and skeletal muscle. Expressed in small renal tumors but not in normal kidney.

It localises to the cytoplasm. It is found in the membrane. Its function is as follows. Regulates phosphorylation of a number of proteins involved in translation regulation including EIF2A, EIF4EBP1 and RPS6KB1. May be involved in the endoplasmic reticulum stress response. The polypeptide is Protein Niban 1 (Rattus norvegicus (Rat)).